We begin with the raw amino-acid sequence, 76 residues long: Exodeoxyribonuclease 7 small subunit (76 aa).

This sequence belongs to the XseB family. As to quaternary structure, heterooligomer composed of large and small subunits.

It localises to the cytoplasm. The enzyme catalyses Exonucleolytic cleavage in either 5'- to 3'- or 3'- to 5'-direction to yield nucleoside 5'-phosphates.. Its function is as follows. Bidirectionally degrades single-stranded DNA into large acid-insoluble oligonucleotides, which are then degraded further into small acid-soluble oligonucleotides. The protein is Exodeoxyribonuclease 7 small subunit of Geobacter metallireducens (strain ATCC 53774 / DSM 7210 / GS-15).